Reading from the N-terminus, the 139-residue chain is Lymphocyte antigen 6H (139 aa).

The first 25 residues, 1–25 (MLPAAMKSLGLALLALLLCPSPAHG), serve as a signal peptide directing secretion. In terms of domain architecture, UPAR/Ly6 spans 26 to 113 (LWCQDCTLAN…CEKDLCNGAS (88 aa)). 5 disulfide bridges follow: Cys28-Cys51, Cys31-Cys39, Cys44-Cys72, Cys76-Cys103, and Cys104-Cys109. Asn35 is a glycosylation site (N-linked (GlcNAc...) asparagine). Asn110 carries GPI-anchor amidated asparagine lipidation. The propeptide at 111–139 (GASVAGRSPWALAGGLLLSLGPALLWAGP) is removed in mature form.

As to quaternary structure, interacts with CHRNA4 and CHRNA7. Strongly expressed in brain, also found in lower levels in eye and reproductive tissues.

Its subcellular location is the cell membrane. Its function is as follows. Believed to act as modulator of nicotinic acetylcholine receptors (nAChRs) activity. In vitro inhibits alpha-3:beta-4-containing nAChRs maximum response. In vitro inhibits alpha-3:beta-4-containing nAChRs maximum response. May play a role in the intracellular trafficking of alpha-7-containing nAChRs and may inhibit their expression at the cell surface. Seems to inhibit alpha-7/CHRNA7 signaling in hippocampal neurons. This is Lymphocyte antigen 6H (Ly6h) from Mus musculus (Mouse).